The primary structure comprises 113 residues: Na(+)/H(+) antiporter subunit C1 (113 aa).

Helical transmembrane passes span 1–21 (MEII…YLVL), 28–48 (IVMG…TMGG), and 72–92 (LILT…VLAF).

Belongs to the CPA3 antiporters (TC 2.A.63) subunit C family. As to quaternary structure, may form a heterooligomeric complex that consists of seven subunits: mnhA1, mnhB1, mnhC1, mnhD1, mnhE1, mnhF1 and mnhG1.

The protein localises to the cell membrane. In terms of biological role, mnh complex is a Na(+)/H(+) antiporter involved in Na(+) excretion. The chain is Na(+)/H(+) antiporter subunit C1 (mnhC1) from Staphylococcus haemolyticus (strain JCSC1435).